We begin with the raw amino-acid sequence, 845 residues long: Krueppel homolog 1 (845 aa).

Residues 141 to 164 (QKQQQQQQHESITNAAPTAAPSAQ) are disordered. 8 consecutive C2H2-type zinc fingers follow at residues 194-216 (FKCD…TKSH), 271-293 (YQCN…YRTH), 299-321 (FECE…RRIH), 327-349 (YKCD…MRIH), 355-377 (HKCS…MRTH), 383-407 (YKCP…SRTH), 413-435 (YHCD…RVQH), and 441-463 (YKCT…IKGH). Disordered stretches follow at residues 469 to 610 (DDEA…VQGQ) and 757 to 845 (GLRS…AKAS). Low complexity-rich tracts occupy residues 474 to 491 (AAAA…SAGS), 498 to 508 (SSNSESSNHSP), and 532 to 559 (ATLS…SSMA). A compositionally biased stretch (polar residues) spans 582–591 (SGVSSAQPAH). Low complexity predominate over residues 759 to 775 (RSSTESPERSSSPESDS). Basic and acidic residues predominate over residues 796–809 (NKGDDGQVDSEKAS). Low complexity predominate over residues 810–823 (GDGTSAAGGAASVG).

It belongs to the krueppel C2H2-type zinc-finger protein family.

Plays a general role in the hierarchies of gene expression leading to metamorphosis. The protein is Krueppel homolog 1 (Kr-h1) of Drosophila melanogaster (Fruit fly).